The chain runs to 193 residues: Chlorate reductase assembly chaperone protein (193 aa).

It belongs to the type II DMSO reductase enzyme chaperone family.

It localises to the cytoplasm. May function as a system-specific chaperone protein essential for the assembly of an active chlorate reductase ClrABC. The protein is Chlorate reductase assembly chaperone protein (clrD) of Ideonella dechloratans.